A 905-amino-acid polypeptide reads, in one-letter code: Gamma-tubulin complex component 2 (905 aa).

At Tyr83 the chain carries Phosphotyrosine. Residues 877–905 (AERSQKAAPQVPVPRGPSAPAPRVAIPAQ) are disordered. Over residues 887 to 896 (VPVPRGPSAP) the composition is skewed to pro residues.

This sequence belongs to the TUBGCP family. As to quaternary structure, component of the gamma-tubulin ring complex (gTuRC) consisting of TUBGCP2, TUBGCP3, TUBGCP4, TUBGCP5 and TUBGCP6 and gamma-tubulin TUBG1 or TUBG2. TUBGCP2, TUBGCP3, TUBGCP4, TUBGCP5 and TUBGCP6 assemble in a 5:5:2:1:1 stoichiometry; each is associated with a gamma-tubulin, thereby arranging 14 gamma-tubulins in a helical manner. Gamma-tubulin at the first position is blocked by TUBGCP3 at the last position, allowing 13 protafilaments to grow into a microtubule. The gTuRC (via TUBGCP3 and TUBGCP6) interacts with ACTB and MZT1; the interactions form a luminal bridge that stabilizes the initial structure during complex assembly. The gTuRC (via TUBGCP2) interacts with MZT2A/MZT2B and CDK5RAP2 (via CM1 motif); the interactions play a role in gTuRC activation. Interacts with ATF5; the ATF5:PCNT:polyglutamylated tubulin (PGT) tripartite unites the mother centriole and the pericentriolar material (PCM) in the centrosome.

Its subcellular location is the cytoplasm. The protein localises to the cytoskeleton. The protein resides in the microtubule organizing center. It is found in the centrosome. Its function is as follows. Component of the gamma-tubulin ring complex (gTuRC) which mediates microtubule nucleation. The gTuRC regulates the minus-end nucleation of alpha-beta tubulin heterodimers that grow into microtubule protafilaments, a critical step in centrosome duplication and spindle formation. Plays a role in neuronal migration. This is Gamma-tubulin complex component 2 (Tubgcp2) from Mus musculus (Mouse).